The primary structure comprises 157 residues: SUMO-conjugating enzyme UBC9-B (157 aa).

In terms of domain architecture, UBC core spans 4–157; that stretch reads IALSRLAQER…VRAQAKKFSP (154 aa). The tract at residues 13-18 is interaction with SUMO1; the sequence is RKAWRK. The active-site Glycyl thioester intermediate is the cysteine 93.

It belongs to the ubiquitin-conjugating enzyme family. As to quaternary structure, forms a tight complex with rangap1 and ranbp2. Interacts with vsx1.

It is found in the nucleus. Its pathway is protein modification; protein sumoylation. In terms of biological role, accepts the ubiquitin-like proteins sumo1, sumo2 and sumo3 from the uble1a-uble1b E1 complex and catalyzes their covalent attachment to other proteins with the help of an E3 ligase such as ranbp2 or cbx4. Essential for nuclear architecture and chromosome segregation. Mediates nuclear localization of vsx1. Required for progression through mitosis during organogenesis. In Danio rerio (Zebrafish), this protein is SUMO-conjugating enzyme UBC9-B (ube2ib).